The following is a 53-amino-acid chain: Small ribosomal subunit protein uS14 (53 aa).

Zn(2+) is bound by residues cysteine 17, cysteine 20, cysteine 36, and cysteine 39.

It belongs to the universal ribosomal protein uS14 family. Zinc-binding uS14 subfamily. As to quaternary structure, part of the 30S ribosomal subunit. Requires Zn(2+) as cofactor.

In terms of biological role, binds 16S rRNA, required for the assembly of 30S particles. The chain is Small ribosomal subunit protein uS14 from Methanococcus maripaludis (strain DSM 14266 / JCM 13030 / NBRC 101832 / S2 / LL).